Reading from the N-terminus, the 366-residue chain is Probable methyltransferase-like protein 24 (366 aa).

An N-terminal signal peptide occupies residues 1–29 (MARERPPGRGCGVLRRCLLGAVLLFGLRL). The tract at residues 36-110 (AGPGSPTRSA…GRPRRKGPRW (75 aa)) is disordered. Residues 44-63 (SAPPGPAWRPPGPHLPPAPG) show a composition bias toward pro residues. Low complexity predominate over residues 91-100 (TPEPGCCAPR).

It belongs to the methyltransferase superfamily.

It localises to the secreted. Probable methyltransferase. The chain is Probable methyltransferase-like protein 24 (METTL24) from Homo sapiens (Human).